A 455-amino-acid chain; its full sequence is Gamma-aminobutyric acid receptor subunit alpha-1 (455 aa).

The signal sequence occupies residues 1–27 (MKKSRGLSDYLWAWTLILSTLSGRSYG). Residues 28–252 (QPSQDELKDN…FHLKRKIGYF (225 aa)) are Extracellular-facing. Asn-37 carries N-linked (GlcNAc...) asparagine glycosylation. Position 93 (Arg-93) interacts with 4-aminobutanoate. Asn-137 carries N-linked (GlcNAc...) asparagine glycosylation. Thr-156 provides a ligand contact to 4-aminobutanoate. A disulfide bridge links Cys-165 with Cys-179. A helical transmembrane segment spans residues 253–273 (VIQTYLPCIMTVILSQVSFWL). Topologically, residues 274-278 (NRESV) are cytoplasmic. Residues 279 to 300 (PARTVFGVTTVLTMTTLSISAR) traverse the membrane as a helical segment. The Extracellular portion of the chain corresponds to 301-310 (NSLPKVAYAT). The helical transmembrane segment at 311-332 (AMDWFIAVCYAFVFSALIEFAT) threads the bilayer. The Cytoplasmic segment spans residues 333 to 420 (VNYFTKRGYA…TFNSVSKIDR (88 aa)). Residues 421-440 (LSRIAFPLLFGIFNLVYWAT) form a helical membrane-spanning segment. The Extracellular portion of the chain corresponds to 441-455 (YLNREPQLKAPTPHQ).

The protein belongs to the ligand-gated ion channel (TC 1.A.9) family. Gamma-aminobutyric acid receptor (TC 1.A.9.5) subfamily. GABRA1 sub-subfamily. Heteropentamer, formed by a combination of alpha (GABRA1-6), beta (GABRB1-3), gamma (GABRG1-3), delta (GABRD), epsilon (GABRE), rho (GABRR1-3), pi (GABRP) and theta (GABRQ) subunits, each subunit exhibiting distinct physiological and pharmacological properties. Interacts with UBQLN1. Interacts with TRAK1. Interacts with KIF21B. Identified in a complex of 720 kDa composed of LHFPL4, NLGN2, GABRA1, GABRB2, GABRG2 and GABRB3. Interacts with LHFPL4. Interacts with NLGN2. Interacts with SHISA7; interaction leads to the regulation of GABA(A) receptor trafficking, channel deactivation kinetics and pharmacology. Glycosylated. As to expression, expressed in the cerebellum.

Its subcellular location is the postsynaptic cell membrane. The protein resides in the cell membrane. It is found in the cytoplasmic vesicle membrane. The enzyme catalyses chloride(in) = chloride(out). With respect to regulation, allosterically activated by benzodiazepines, the neuroanesthetic alphaxalone and pentobarbital. Inhibited by the antagonist bicuculline. Potentiated by histamine. Functionally, alpha subunit of the heteropentameric ligand-gated chloride channel gated by Gamma-aminobutyric acid (GABA), a major inhibitory neurotransmitter in the brain. GABA-gated chloride channels, also named GABA(A) receptors (GABAAR), consist of five subunits arranged around a central pore and contain GABA active binding site(s) located at the alpha and beta subunit interface(s). When activated by GABA, GABAARs selectively allow the flow of chloride anions across the cell membrane down their electrochemical gradient. Alpha-1/GABRA1-containing GABAARs are largely synaptic. Chloride influx into the postsynaptic neuron following GABAAR opening decreases the neuron ability to generate a new action potential, thereby reducing nerve transmission. GABAARs containing alpha-1 and beta-2 or -3 subunits exhibit synaptogenic activity; the gamma-2 subunit being necessary but not sufficient to induce rapid synaptic contacts formation. GABAARs function also as histamine receptor where histamine binds at the interface of two neighboring beta subunits and potentiates GABA response. GABAARs containing alpha, beta and epsilon subunits also permit spontaneous chloride channel activity while preserving the structural information required for GABA-gated openings. Alpha-1-mediated plasticity in the orbitofrontal cortex regulates context-dependent action selection. Together with rho subunits, may also control neuronal and glial GABAergic transmission in the cerebellum. The polypeptide is Gamma-aminobutyric acid receptor subunit alpha-1 (Mus musculus (Mouse)).